The following is a 238-amino-acid chain: MIAFTVLLSLAAVLQQSSGTVDFASESSNKKDYRKEIVDKHNDLRRSVKPTARNMLQMKWNSRAAQNAKRWANRCTFAHSPPYTRTVGKLRCGENIFMSSQPFAWSGVVQAWYDEVKKFVYGIGAKPPSSVIGHYTQVVWYKSHLLGCASAKCSSTKYLYVCQYCPAGNIIGSIATPYKSGPPCGDCPSACDNGLCTNPCKHNNDFSNCKALAKKSKCQTEWIKSKCPATCFCRTEII.

The signal sequence occupies residues 1-19 (MIAFTVLLSLAAVLQQSSG). Positions 20 to 28 (TVDFASESS) are excised as a propeptide. Residues 38–164 (VDKHNDLRRS…STKYLYVCQY (127 aa)) form the SCP domain. 8 disulfide bridges follow: Cys-75–Cys-153, Cys-92–Cys-165, Cys-148–Cys-162, Cys-184–Cys-191, Cys-187–Cys-196, Cys-200–Cys-233, Cys-209–Cys-227, and Cys-218–Cys-231. Residues 200-233 (CKHNNDFSNCKALAKKSKCQTEWIKSKCPATCFC) enclose the ShKT domain.

It belongs to the CRISP family. As to expression, expressed by the venom gland.

The protein localises to the secreted. In terms of biological role, blocks olfactory (CNGA2) and retinal (CNGA1) CNG channel currents. Does not affect neither depolarization- nor caffeine-induced contraction of smooth muscle. This is Cysteine-rich venom protein pseudechetoxin-like from Oxyuranus scutellatus scutellatus (Australian taipan).